Here is a 195-residue protein sequence, read N- to C-terminus: Cbp/p300-interacting transactivator 1 (195 aa).

Disordered stretches follow at residues 1 to 24 and 51 to 149; these read MPTM…NANP and ASNG…SPAI. Residues 54–78 show a composition bias toward low complexity; the sequence is GTKASGAPTSSSGSPSPISSSTATP. Residues 97-106 are compositionally biased toward polar residues; the sequence is MQLQKLNSQY. The segment covering 137 to 148 has biased composition (low complexity); that stretch reads SLSPSAGAQSPA. Positions 160-169 match the Nuclear export signal motif; the sequence is LMSLVVELGL.

It belongs to the CITED family. Interacts (via C-terminus) with CREBBP. Interacts with EGR2. Homodimer. Binds to RBM14. Interacts (via N-terminus) with HSPA8; the interaction suppresses the association of CITED1 with p300/CBP and SMAD-mediated transcription transactivation. Interacts (via C-terminus) with TOX3 (via HGM box); the interaction increases estrogen-response element (ERE)-dependent transcription and protection against cell death. Interacts with ESR1; the interaction occurs in a estrogen-dependent manner. Interacts (unphosphorylated form preferentially and via C-terminus) with EP300. Phosphorylated. Phosphorylation changes in a cell cycle-dependent manner and reduces its transcriptional cofactor activity.

Its subcellular location is the nucleus. The protein localises to the cytoplasm. Transcriptional coactivator of the p300/CBP-mediated transcription complex. Enhances SMAD-mediated transcription by strengthening the functional link between the DNA-binding SMAD transcription factors and the p300/CBP transcription coactivator complex. Stimulates estrogen-dependent transactivation activity mediated by estrogen receptors signaling; stabilizes the interaction of estrogen receptor ESR1 and histone acetyltransferase EP300. Positively regulates TGF-beta signaling through its association with the SMAD/p300/CBP-mediated transcriptional coactivator complex. Induces transcription from estrogen-responsive promoters and protection against cell death. Potentiates EGR2-mediated transcriptional activation activity from the ERBB2 promoter. Acts as an inhibitor of osteoblastic mineralization through a cAMP-dependent parathyroid hormone receptor signaling. May play a role in pigmentation of melanocytes. Associates with chromatin to the estrogen-responsive TGF-alpha promoter region in a estrogen-dependent manner. The sequence is that of Cbp/p300-interacting transactivator 1 (CITED1) from Bos taurus (Bovine).